A 307-amino-acid polypeptide reads, in one-letter code: Probable protein S-acyltransferase 14 (307 aa).

The next 2 membrane-spanning stretches (helical) occupy residues 22-42 (LGSIMILLVLGVVGVTYYAVV) and 63-83 (ILILFHFLLAMLLWSYFSVVF). The DHHC domain occupies 127 to 177 (RFCRKCNQLKPSRCHHCSVCGRCVLKMDHHCVWVVNCVGALNYKYFLLFLF). Residue Cys157 is the S-palmitoyl cysteine intermediate of the active site. Transmembrane regions (helical) follow at residues 171 to 191 (YFLLFLFYTFLETTLVTLVLM) and 213 to 233 (TFLAFVLNLAFALSVMGFLIM).

Belongs to the DHHC palmitoyltransferase family.

It localises to the golgi apparatus. Its subcellular location is the trans-Golgi network membrane. It carries out the reaction L-cysteinyl-[protein] + hexadecanoyl-CoA = S-hexadecanoyl-L-cysteinyl-[protein] + CoA. In terms of biological role, palmitoyl acyltransferase. This Arabidopsis thaliana (Mouse-ear cress) protein is Probable protein S-acyltransferase 14 (PAT14).